A 552-amino-acid chain; its full sequence is MHCERFLCVLRIIGTTLFGVSLLLGITAAYIVGYQFIQTDNYYFSFGLYGAFLASHLIIQSLFAFLEHRKMKKSLETPIKLNKTVALCIAAYQEDPDYLRKCLQSVKRLTYPGIKVVMVIDGNSDDDLYMMDIFSEVMGRDKSVTYIWKNNFHERGPGETEESHKESSQHVTQLVLSNKSICIMQKWGGKREVMYTAFRALGRSVDYVQVCDSDTMLDPASSVEMVKVLEEDPMVGGVGGDVQILNKYDSWISFLSSVRYWMAFNIERACQSYFGCVQCISGPLGMYRNSLLHEFVEDWYNQEFMGNQCSFGDDRHLTNRVLSLGYATKYTARSKCLTETPIEYLRWLNQQTRWSKSYFREWLYNAMWFHKHHLWMTYEAVITGFFPFFLIATVIQLFYRGKIWNILLFLLTVQLVGLIKSSFASCLRGNIVMVFMSLYSVLYMSSLLPAKMFAIATINKAGWGTSGRKTIVVNFIGLIPVSVWFTILLGGVIFTIYKESKKPFSESKQTVLIVGTLIYACYWVVLLTLYVVLINKCGRRKKGQQYDMVLDV.

Residues 1–11 lie on the Cytoplasmic side of the membrane; sequence MHCERFLCVLR. The chain crosses the membrane as a helical span at residues 12 to 32; sequence IIGTTLFGVSLLLGITAAYIV. Residues 33-45 are Extracellular-facing; that stretch reads GYQFIQTDNYYFS. A helical transmembrane segment spans residues 46 to 66; that stretch reads FGLYGAFLASHLIIQSLFAFL. At 67 to 374 the chain is on the cytoplasmic side; sequence EHRKMKKSLE…NAMWFHKHHL (308 aa). At T110 the chain carries Phosphothreonine. K190 is covalently cross-linked (Glycyl lysine isopeptide (Lys-Gly) (interchain with G-Cter in ubiquitin)). The O-linked (GlcNAc) serine glycan is linked to S221. T328 carries the post-translational modification Phosphothreonine. The helical transmembrane segment at 375–395 threads the bilayer; the sequence is WMTYEAVITGFFPFFLIATVI. Residues 396 to 402 lie on the Extracellular side of the membrane; the sequence is QLFYRGK. The chain crosses the membrane as a helical span at residues 403–423; sequence IWNILLFLLTVQLVGLIKSSF. At 424 to 429 the chain is on the cytoplasmic side; the sequence is ASCLRG. The helical transmembrane segment at 430 to 450 threads the bilayer; the sequence is NIVMVFMSLYSVLYMSSLLPA. Residues 451–475 are Extracellular-facing; sequence KMFAIATINKAGWGTSGRKTIVVNF. A helical membrane pass occupies residues 476–496; sequence IGLIPVSVWFTILLGGVIFTI. The Cytoplasmic segment spans residues 497–510; the sequence is YKESKKPFSESKQT. Residues 511-531 form a helical membrane-spanning segment; it reads VLIVGTLIYACYWVVLLTLYV. Residues 532–552 are Extracellular-facing; the sequence is VLINKCGRRKKGQQYDMVLDV.

Belongs to the NodC/HAS family. Homodimer; dimerization promotes enzymatic activity. Forms heterodimer with HAS3. Forms heterodimer with HAS1. Mg(2+) is required as a cofactor. Phosphorylation at Thr-328 is essential for hyaluronan synthase activity. Post-translationally, O-GlcNAcylation at Ser-221 increases the stability of HAS2 and plasma membrane localization. In terms of processing, ubiquitination at Lys-190; this ubiquitination is essential for hyaluronan synthase activity and homo- or hetero-oligomerization. Can also be poly-ubiquitinated. Deubiquitinated by USP17L22/USP17 and USP4. USP17L22/USP17 efficiently removes 'Lys-63'- and 'Lys-48'-linked polyubiquitin chains, whereas USP4 preferentially removes monoubiquitination and, partially, both 'Lys-63'- and 'Lys-48'-linked polyubiquitin chain.

Its subcellular location is the cell membrane. It is found in the endoplasmic reticulum membrane. The protein resides in the vesicle. The protein localises to the golgi apparatus membrane. It localises to the lysosome. The catalysed reaction is [hyaluronan](n) + UDP-N-acetyl-alpha-D-glucosamine = N-acetyl-beta-D-glucosaminyl-(1-&gt;4)-[hyaluronan](n) + UDP + H(+). It carries out the reaction N-acetyl-beta-D-glucosaminyl-(1-&gt;4)-[hyaluronan](n) + UDP-alpha-D-glucuronate = [hyaluronan](n+1) + UDP + H(+). The protein operates within glycan biosynthesis; hyaluronan biosynthesis. Functionally, catalyzes the addition of GlcNAc or GlcUA monosaccharides to the nascent hyaluronan polymer. Therefore, it is essential to hyaluronan synthesis a major component of most extracellular matrices that has a structural role in tissues architectures and regulates cell adhesion, migration and differentiation. This is one of three isoenzymes responsible for cellular hyaluronan synthesis and it is particularly responsible for the synthesis of high molecular mass hyaluronan. This is Hyaluronan synthase 2 (Has2) from Rattus norvegicus (Rat).